Here is a 302-residue protein sequence, read N- to C-terminus: Epoxyqueuosine reductase (302 aa).

The Proton donor role is filled by aspartate 128. Residues 170–202 enclose the 4Fe-4S ferredoxin-type 1 domain; it reads LPLQADGPIRDYCGTCTACIDACPTDAITPYEV. 8 residues coordinate [4Fe-4S] cluster: cysteine 182, cysteine 185, cysteine 188, cysteine 192, cysteine 207, cysteine 234, cysteine 237, and cysteine 241. The 31-residue stretch at 221–251 folds into the 4Fe-4S ferredoxin-type 2 domain; that stretch reads NEFKGKMENWIFGCDICQDVCPWNSFARPHS.

It belongs to the QueG family. As to quaternary structure, monomer. It depends on cob(II)alamin as a cofactor. Requires [4Fe-4S] cluster as cofactor.

The protein resides in the cytoplasm. The catalysed reaction is epoxyqueuosine(34) in tRNA + AH2 = queuosine(34) in tRNA + A + H2O. It functions in the pathway tRNA modification; tRNA-queuosine biosynthesis. Functionally, catalyzes the conversion of epoxyqueuosine (oQ) to queuosine (Q), which is a hypermodified base found in the wobble positions of tRNA(Asp), tRNA(Asn), tRNA(His) and tRNA(Tyr). The sequence is that of Epoxyqueuosine reductase from Leadbetterella byssophila (strain DSM 17132 / JCM 16389 / KACC 11308 / NBRC 106382 / 4M15).